The chain runs to 1386 residues: Putative ATP-dependent RNA helicase DHX57 (1386 aa).

Residues 1-11 (MSSSVRRKGKP) show a composition bias toward basic residues. Disordered regions lie at residues 1 to 106 (MSSS…MTSE) and 120 to 147 (EQDA…NDER). Gly residues-rich tracts occupy residues 12–23 (GKGGGKGSSRGG) and 35–50 (GSGG…GGGN). The stretch at 101–125 (LHMTSENQEKVKALLRDLQEQDADA) forms a coiled coil. 2 positions are modified to phosphoserine: Ser-127 and Ser-132. Over residues 133–143 (GEEEDDEPDCC) the composition is skewed to acidic residues. One can recognise a UBA domain in the interval 180 to 220 (TVSPFAVQKLSRYGFNTERCQAVLRMCDGDVGASLEHLLTQ). Residues 299 to 326 (ENSLEICKFYLKGNCKFGSKCRFKHEVP) form a C3H1-type zinc finger. Ser-475, Ser-477, and Ser-480 each carry phosphoserine. A Helicase ATP-binding domain is found at 554-721 (LNLLRKHQVV…FNSCPVITIP (168 aa)). Residue 567–574 (GMTGCGKT) coordinates ATP. The DEVH box signature appears at 668 to 671 (DEVH). In terms of domain architecture, Helicase C-terminal spans 830 to 1010 (LIEALLEWIV…QLCLRIKILE (181 aa)).

It belongs to the DEAD box helicase family. DEAH subfamily.

The catalysed reaction is ATP + H2O = ADP + phosphate + H(+). Functionally, probable ATP-binding RNA helicase. This Homo sapiens (Human) protein is Putative ATP-dependent RNA helicase DHX57 (DHX57).